The chain runs to 95 residues: Protein TusB (95 aa).

The protein belongs to the DsrH/TusB family. Heterohexamer, formed by a dimer of trimers. The hexameric TusBCD complex contains 2 copies each of TusB, TusC and TusD. The TusBCD complex interacts with TusE.

The protein resides in the cytoplasm. Part of a sulfur-relay system required for 2-thiolation of 5-methylaminomethyl-2-thiouridine (mnm(5)s(2)U) at tRNA wobble positions. The polypeptide is Protein TusB (Erwinia tasmaniensis (strain DSM 17950 / CFBP 7177 / CIP 109463 / NCPPB 4357 / Et1/99)).